The sequence spans 568 residues: Archaeosine synthase subunit alpha (568 aa).

In terms of domain architecture, PUA spans 496–565 (YDALKSYWVK…AKKGVAVKVR (70 aa)).

It belongs to the archaeosine synthase type 1 family. As to quaternary structure, forms a robust complex with the archaeosine synthase beta subunit RaSEA, likely an alpha(2)beta(2) heterotetrameric structure. Formation of this complex highly increases lysine transfer activity.

The enzyme catalyses 7-cyano-7-carbaguanosine(15) in tRNA + L-lysine = 7-N-[(5S)-5-amino-5-carboxypentyl]formamidino-7-deazaguanosine(15) in tRNA. It participates in tRNA modification; archaeosine-tRNA biosynthesis. Its function is as follows. Functions in the biosynthesis of archaeosine, a modified nucleoside present in the dihydrouridine loop (D-loop) of archaeal tRNAs. Catalyzes the addition of L-lysine to the cyano group of 7-cyano-7-deazaguanine (preQ0)-modified tRNAs at position 15, to generate q0kN15-tRNA, a q0N lysine adduct identified as 7-N-[(5S)-5-amino-5-carboxypentyl]formamidino-7-deazaguanosine. This is Archaeosine synthase subunit alpha from Thermococcus kodakarensis (strain ATCC BAA-918 / JCM 12380 / KOD1) (Pyrococcus kodakaraensis (strain KOD1)).